The primary structure comprises 856 residues: DNA gyrase subunit A (856 aa).

In terms of domain architecture, Topo IIA-type catalytic spans 45–517; it reads LPDARDGLKP…DDGTVTHEDL (473 aa). Residue Y133 is the O-(5'-phospho-DNA)-tyrosine intermediate of the active site. The GyrA-box signature appears at 544–550; the sequence is QHRGGKG. Residues 822 to 856 are disordered; the sequence is TVASVDTHPRTDDSSEADSGDGESESENATATTPS. Acidic residues predominate over residues 835-847; sequence SSEADSGDGESES.

This sequence belongs to the type II topoisomerase GyrA/ParC subunit family. As to quaternary structure, heterotetramer, composed of two GyrA and two GyrB chains. In the heterotetramer, GyrA contains the active site tyrosine that forms a transient covalent intermediate with DNA, while GyrB binds cofactors and catalyzes ATP hydrolysis.

It localises to the cytoplasm. It carries out the reaction ATP-dependent breakage, passage and rejoining of double-stranded DNA.. A type II topoisomerase that negatively supercoils closed circular double-stranded (ds) DNA in an ATP-dependent manner to modulate DNA topology and maintain chromosomes in an underwound state. Negative supercoiling favors strand separation, and DNA replication, transcription, recombination and repair, all of which involve strand separation. Also able to catalyze the interconversion of other topological isomers of dsDNA rings, including catenanes and knotted rings. Type II topoisomerases break and join 2 DNA strands simultaneously in an ATP-dependent manner. The protein is DNA gyrase subunit A of Haloquadratum walsbyi (strain DSM 16790 / HBSQ001).